The primary structure comprises 282 residues: MIKNTFSRKKYFALSRRMEKEEEEKKVALPINCPSCSARIAAEALQRNLKVCPKCQHHFSLSARERIDLMVDKDSFQEFDADLSSFNLLDFPGYQEKLEKAQELSGSREGIITGLASIDGHKLVLGVMESGFMMASMGSVVGEKVCRAVEQAMELSCPLLICSCSGGARMQEGMVALMQMAKTSAVLGKFNQAGLLYISLLTHPTTGGVSASFASLADIILAEPGALIGFAGPRVIKQTIGQQLPPRFQRSEFLLEHGMIDLLVERSQLKATLSSLLGLHQG.

In terms of domain architecture, CoA carboxyltransferase N-terminal spans 29-282 (LPINCPSCSA…LSSLLGLHQG (254 aa)). Cysteine 33, cysteine 36, cysteine 52, and cysteine 55 together coordinate Zn(2+). The C4-type zinc finger occupies 33-55 (CPSCSARIAAEALQRNLKVCPKC).

The protein belongs to the AccD/PCCB family. Acetyl-CoA carboxylase is a heterohexamer composed of biotin carboxyl carrier protein (AccB), biotin carboxylase (AccC) and two subunits each of ACCase subunit alpha (AccA) and ACCase subunit beta (AccD). Zn(2+) is required as a cofactor.

It is found in the cytoplasm. The catalysed reaction is N(6)-carboxybiotinyl-L-lysyl-[protein] + acetyl-CoA = N(6)-biotinyl-L-lysyl-[protein] + malonyl-CoA. Its pathway is lipid metabolism; malonyl-CoA biosynthesis; malonyl-CoA from acetyl-CoA: step 1/1. In terms of biological role, component of the acetyl coenzyme A carboxylase (ACC) complex. Biotin carboxylase (BC) catalyzes the carboxylation of biotin on its carrier protein (BCCP) and then the CO(2) group is transferred by the transcarboxylase to acetyl-CoA to form malonyl-CoA. This chain is Acetyl-coenzyme A carboxylase carboxyl transferase subunit beta, found in Syntrophomonas wolfei subsp. wolfei (strain DSM 2245B / Goettingen).